The sequence spans 329 residues: Sulfate-binding protein (329 aa).

Positions 1–19 (MNKWGVGLTFLLAATSVMA) are cleaved as a signal peptide.

Belongs to the prokaryotic sulfate-binding protein family.

The protein localises to the periplasm. Functionally, this protein specifically binds sulfate and is involved in its transmembrane transport. This is Sulfate-binding protein (sbp) from Escherichia coli (strain K12).